A 147-amino-acid polypeptide reads, in one-letter code: UPF0306 protein YPTB0506 (147 aa).

It belongs to the UPF0306 family.

This is UPF0306 protein YPTB0506 from Yersinia pseudotuberculosis serotype I (strain IP32953).